We begin with the raw amino-acid sequence, 94 residues long: Ribonuclease P protein component 1 (94 aa).

Belongs to the eukaryotic/archaeal RNase P protein component 1 family. In terms of assembly, consists of a catalytic RNA component and at least 4-5 protein subunits.

It is found in the cytoplasm. It catalyses the reaction Endonucleolytic cleavage of RNA, removing 5'-extranucleotides from tRNA precursor.. Functionally, part of ribonuclease P, a protein complex that generates mature tRNA molecules by cleaving their 5'-ends. The sequence is that of Ribonuclease P protein component 1 from Thermofilum pendens (strain DSM 2475 / Hrk 5).